We begin with the raw amino-acid sequence, 1505 residues long: Probable serine/threonine-protein kinase irlD (1505 aa).

Residues 1-18 are compositionally biased toward basic residues; the sequence is MGPKKGKRSHSKNHHHHN. 4 disordered regions span residues 1 to 30, 121 to 211, 548 to 571, and 862 to 1013; these read MGPK…NSGG, IPQP…NNIL, TTTT…DKEN, and EENE…TIAT. The span at 139–158 shows a compositional bias: low complexity; the sequence is SISTTTTTTTATAIEIESSS. Residues 159 to 172 are compositionally biased toward polar residues; the sequence is GLTSNITDSTEIQL. 2 stretches are compositionally biased toward low complexity: residues 173–209 and 548–561; these read DSTT…NSNN and TTTT…TTTT. 2 stretches are compositionally biased toward basic and acidic residues: residues 562–571 and 862–882; these read IDKDEKDKEN and EENE…EKKK. A coiled-coil region spans residues 846–892; sequence IRTEESLKAEKDLLEQEENEKKRLKEKRKKEEKEKKKQQNLKQKSLI. Residues 896–924 are compositionally biased toward low complexity; sequence TTTTTTTTPIPITVPIPTQTQTPTQTPTQ. Positions 925-943 are enriched in pro residues; the sequence is TPIPTPIPTTPIPTTPIPI. 2 stretches are compositionally biased toward low complexity: residues 944 to 954 and 960 to 977; these read PIQLTPTTPKT and TPKT…KTPK. The span at 978–989 shows a compositional bias: polar residues; sequence NSTLDKQTISTP. The region spanning 1054-1324 is the Protein kinase domain; that stretch reads RKDEFIIGRG…TENILLHPFF (271 aa). ATP is bound by residues 1060-1068 and lysine 1083; that span reads IGRGSNGTL. Aspartate 1194 (proton acceptor) is an active-site residue. One can recognise a KEN domain in the interval 1327-1505; sequence HEKKVKFIDA…LIYFNDLIIK (179 aa).

This sequence belongs to the protein kinase superfamily. Ser/Thr protein kinase family.

The catalysed reaction is L-seryl-[protein] + ATP = O-phospho-L-seryl-[protein] + ADP + H(+). It catalyses the reaction L-threonyl-[protein] + ATP = O-phospho-L-threonyl-[protein] + ADP + H(+). In Dictyostelium discoideum (Social amoeba), this protein is Probable serine/threonine-protein kinase irlD (irlD).